Reading from the N-terminus, the 4592-residue chain is Intermembrane lipid transfer protein vps13D (4592 aa).

In terms of domain architecture, Chorein N-terminal spans 3-102 (FESVVAEVID…SSTNVSSNYS (100 aa)). 13 disordered regions span residues 95 to 142 (TNVS…TASQ), 157 to 199 (LDKK…IDSQ), 286 to 307 (STTS…SSSS), 445 to 529 (KKDD…IKGI), 574 to 605 (SNST…LSPM), 826 to 861 (NYNN…QQGI), 1040 to 1083 (TTSP…KRQW), 1219 to 1249 (YFKN…EKKP), 1655 to 1717 (QQQE…QQSN), 1855 to 1886 (SNNN…NSLF), 1971 to 2001 (TSSL…TTTS), 2025 to 2056 (PLIN…EQQQ), and 2245 to 2270 (NNNN…NIIN). Composition is skewed to low complexity over residues 117 to 139 (SSSN…TTST) and 172 to 199 (KSTN…IDSQ). Positions 437–517 (KNATIKLNKK…KKKEEKGKSK (81 aa)) form a coiled coil. Basic and acidic residues predominate over residues 445–457 (KKDDKKDDKKDDI). Positions 458–474 (NSSSSSIGSSNSSNNTP) are enriched in low complexity. A compositionally biased stretch (basic and acidic residues) spans 475 to 529 (TKDKNKEKEKDKEKEKEKEKKKEKEKLKLEEKKKKKEEKGKSKSKDSKKNKIKGI). A compositionally biased stretch (low complexity) spans 574-591 (SNSTTTNNSNNNSSSSPN). Residues 592–603 (ILATSPSNNSLS) are compositionally biased toward polar residues. Residues 829–838 (NQSSSSSSSS) are compositionally biased toward low complexity. Residues 1040 to 1059 (TTSPTFNSLNNKPSTLQNNH) show a composition bias toward polar residues. Residues 1064-1076 (NGNSSNNNNTDSP) show a composition bias toward low complexity. The segment covering 1234-1244 (NTEDDEQEEEE) has biased composition (acidic residues). Composition is skewed to low complexity over residues 1669 to 1689 (KSIN…LRKS) and 1702 to 1715 (QQQQ…QQQQ). Positions 2037 to 2048 (SKSSSSKSSSSK) are enriched in low complexity. The TPR 1 repeat unit spans residues 2321–2354 (TLQINDLGANIISIGNKSTSIKCFLRSIRLSDSR). 7 disordered regions span residues 2456-2489 (KTNN…SIST), 2862-2882 (AVST…NNNG), 3006-3035 (GEQK…SSSS), 3106-3129 (NSSG…SSSN), 3356-3384 (KLPT…KRTT), 3560-3580 (NSLK…HRHN), and 3630-3679 (STNH…SKLK). Composition is skewed to low complexity over residues 2458–2478 (NNNN…NNNN), 2864–2880 (STSN…SNNN), and 3015–3035 (TSTS…SSSS). A compositionally biased stretch (low complexity) spans 3358–3384 (PTSPQTSSSSSPPPATTTTSTTTKRTT). Residues 3569–3580 (KSKKQQQQHRHN) show a composition bias toward basic residues. Residues 3640–3679 (SSTFNNSSNDNINNGNSNNNTSNSLSPPSSSSSINLSKLK) are compositionally biased toward low complexity. Residues 3789-3822 (EVPKPYLGRVDIKDNDTHTSIHFYDQDTEYSPFR) form a TPR 2 repeat. Low complexity-rich tracts occupy residues 3872–3894 (TTTT…NNNN) and 4111–4135 (QQLQ…NPIN). Disordered stretches follow at residues 3872–3897 (TTTT…NQYI) and 4105–4135 (KKHK…NPIN).

Its subcellular location is the membrane. Its function is as follows. Mediates the transfer of lipids between membranes at organelle contact sites. The sequence is that of Intermembrane lipid transfer protein vps13D (vps13D) from Dictyostelium discoideum (Social amoeba).